We begin with the raw amino-acid sequence, 121 residues long: Large ribosomal subunit protein bL12 (121 aa).

Belongs to the bacterial ribosomal protein bL12 family. As to quaternary structure, homodimer. Part of the ribosomal stalk of the 50S ribosomal subunit. Forms a multimeric L10(L12)X complex, where L10 forms an elongated spine to which 2 to 4 L12 dimers bind in a sequential fashion. Binds GTP-bound translation factors.

Functionally, forms part of the ribosomal stalk which helps the ribosome interact with GTP-bound translation factors. Is thus essential for accurate translation. This chain is Large ribosomal subunit protein bL12, found in Pseudomonas savastanoi pv. phaseolicola (strain 1448A / Race 6) (Pseudomonas syringae pv. phaseolicola (strain 1448A / Race 6)).